The chain runs to 321 residues: Carbonic anhydrase, chloroplastic (321 aa).

Residues 1 to 100 (MSTASINSCL…AAARVDQITA (100 aa)) constitute a chloroplast transit peptide.

This sequence belongs to the beta-class carbonic anhydrase family. In terms of assembly, homohexamer.

It is found in the plastid. The protein localises to the chloroplast stroma. The enzyme catalyses hydrogencarbonate + H(+) = CO2 + H2O. Functionally, reversible hydration of carbon dioxide. In Nicotiana tabacum (Common tobacco), this protein is Carbonic anhydrase, chloroplastic.